Here is a 243-residue protein sequence, read N- to C-terminus: Geranylgeranylglyceryl phosphate synthase (243 aa).

Mg(2+) contacts are provided by Asp29 and Ser58. Residues 178-184, 209-210, and 231-232 each bind sn-glycerol 1-phosphate; these read YLEAGSG, GG, and GT.

The protein belongs to the GGGP/HepGP synthase family. Group II subfamily. As to quaternary structure, homodimer. It depends on Mg(2+) as a cofactor.

The catalysed reaction is sn-glycerol 1-phosphate + (2E,6E,10E)-geranylgeranyl diphosphate = sn-3-O-(geranylgeranyl)glycerol 1-phosphate + diphosphate. Prenyltransferase that catalyzes the transfer of the geranylgeranyl moiety of geranylgeranyl diphosphate (GGPP) to the C3 hydroxyl of sn-glycerol-1-phosphate (G1P). In Flavobacterium johnsoniae (strain ATCC 17061 / DSM 2064 / JCM 8514 / BCRC 14874 / CCUG 350202 / NBRC 14942 / NCIMB 11054 / UW101) (Cytophaga johnsonae), this protein is Geranylgeranylglyceryl phosphate synthase.